The chain runs to 284 residues: N-methyltransferase sirN (284 aa).

The protein belongs to the methyltransferase superfamily. LaeA methyltransferase family.

Its pathway is mycotoxin biosynthesis. In terms of biological role, N-methyltransferase; part of the gene cluster that mediates the biosynthesis of sirodesmin PL, an epipolythiodioxopiperazine (ETP) characterized by a disulfide bridged cyclic dipeptide and that acts as a phytotoxin which is involved in the blackleg didease of canola. SirD catalyzes the O-prenylation of L-tyrosine (L-Tyr) in the presence of dimethylallyl diphosphate (DMAPP) to yield 4-O-dimethylallyl-L-Tyr, and therefore represents probably the first pathway-specific enzyme in the biosynthesis of sirodesmin PL. 4-O-dimethylallyl-L-Tyr, then undergoes condensation with L-Ser in a reaction catalyzed by the non-ribosomal peptide synthase sirP to form the diketopiperazine (DKP) backbone. Further bishydroxylation of the DKP performed by the cytochrome P450 monooxygenase sirC leads to the production of the intermediate phomamide. This step is essential to form the reactive thiol group required for toxicity of sirodesmin PL. The next steps of sirodesmin biosynthesis are not well understood yet but some predictions could be made from intermediate compounds identification. Phomamide is converted into phomalizarine via oxidation, probably by sirT. Further oxidation, methylation (by sirM or sirN) and reduction steps convert phomalizarine to deacetyl sirodesmin. Finally, acetyltransferase sirH probably acetylates deacetyl sirodesmin to produce sirodesmin PL. The protein is N-methyltransferase sirN of Leptosphaeria maculans (Blackleg fungus).